We begin with the raw amino-acid sequence, 83 residues long: Large ribosomal subunit protein bL31B (83 aa).

Belongs to the bacterial ribosomal protein bL31 family. Type B subfamily. As to quaternary structure, part of the 50S ribosomal subunit.

The chain is Large ribosomal subunit protein bL31B from Levilactobacillus brevis (strain ATCC 367 / BCRC 12310 / CIP 105137 / JCM 1170 / LMG 11437 / NCIMB 947 / NCTC 947) (Lactobacillus brevis).